The chain runs to 3707 residues: Basement membrane-specific heparan sulfate proteoglycan core protein (3707 aa).

A signal peptide spans 1–21; that stretch reads MGQRAVGSLLLGLLLHARLLA. O-linked (Xyl...) (heparan sulfate) serine glycans are attached at residues serine 65, serine 71, and serine 76. One can recognise an SEA domain in the interval 80 to 191; the sequence is QMVYFRALVN…WGFKFRRLGT (112 aa). A glycan (N-linked (GlcNAc...) asparagine) is linked at asparagine 89. 4 LDL-receptor class A domains span residues 195-234, 281-319, 320-359, and 360-403; these read FPRV…ELNC, GPSA…ELGC, ASPP…EANC, and SVKQ…EFGC. Intrachain disulfides connect cysteine 199/cysteine 212, cysteine 206/cysteine 225, cysteine 219/cysteine 234, cysteine 285/cysteine 297, cysteine 292/cysteine 310, cysteine 304/cysteine 319, cysteine 325/cysteine 337, cysteine 332/cysteine 350, cysteine 344/cysteine 359, cysteine 368/cysteine 381, cysteine 375/cysteine 394, cysteine 388/cysteine 403, and cysteine 428/cysteine 479. Asparagine 358 carries an N-linked (GlcNAc...) asparagine glycan. Positions 404-504 constitute an Ig-like C2-type 1 domain; that stretch reads MPPQVVTPPQ…VLELVPQRGP (101 aa). Positions 521–530 constitute a Laminin EGF-like 1; first part domain; that stretch reads CFCFGVTNVC. Residues 538 to 730 form the Laminin IV type A 1 domain; it reads DQIRLSFDQP…IHGRAHSVEE (193 aa). Residue asparagine 554 is glycosylated (N-linked (GlcNAc...) asparagine). The region spanning 731 to 763 is the Laminin EGF-like 1; second part domain; it reads CRCPIGYSGLSCESCDAHFTRVPGGPYLGTCSG. Intrachain disulfides connect cysteine 764/cysteine 773, cysteine 766/cysteine 780, cysteine 783/cysteine 792, cysteine 795/cysteine 811, cysteine 814/cysteine 829, cysteine 816/cysteine 839, cysteine 842/cysteine 851, cysteine 854/cysteine 869, cysteine 879/cysteine 892, cysteine 894/cysteine 903, and cysteine 906/cysteine 921. 2 Laminin EGF-like domains span residues 764 to 813 and 814 to 871; these read CNCN…ACRP and CPCP…KCRP. The Laminin EGF-like 4; truncated domain maps to 879–923; sequence CDERGSLGTSGETCRCKNNVVGRLCNECSDGSFHLSKQNPDGCLK. The 10-residue stretch at 924–933 folds into the Laminin EGF-like 5; first part domain; sequence CFCMGVSRQC. In terms of domain architecture, Laminin IV type A 2 spans 941–1125; sequence AQVLGASEQP…GQDSAREVEQ (185 aa). Residues 1126 to 1158 enclose the Laminin EGF-like 5; second part domain; sequence CTCPPGYRGPSCQDCDTGYTRVPSGLYLGTCER. Cystine bridges form between cysteine 1159–cysteine 1168, cysteine 1161–cysteine 1175, cysteine 1178–cysteine 1187, cysteine 1190–cysteine 1206, cysteine 1209–cysteine 1224, cysteine 1211–cysteine 1234, cysteine 1237–cysteine 1246, cysteine 1249–cysteine 1263, cysteine 1275–cysteine 1287, cysteine 1277–cysteine 1293, cysteine 1295–cysteine 1304, and cysteine 1307–cysteine 1322. 3 Laminin EGF-like domains span residues 1159 to 1208, 1209 to 1265, and 1275 to 1324; these read CNCH…DCQP, CPCY…PCHR, and CGCD…GCLP. The Laminin EGF-like 9; first part domain maps to 1325 to 1334; sequence CFCMGVTQQC. Residues 1344-1529 enclose the Laminin IV type A 3 domain; that stretch reads ISTHFAPGDF…SGPRALEVEE (186 aa). The Laminin EGF-like 9; second part domain occupies 1530-1562; the sequence is CRCPPGYVGLSCQDCAPGYTRTGSGLYLGQCEL. 8 disulfide bridges follow: cysteine 1563–cysteine 1572, cysteine 1565–cysteine 1579, cysteine 1582–cysteine 1591, cysteine 1594–cysteine 1610, cysteine 1613–cysteine 1628, cysteine 1615–cysteine 1638, cysteine 1641–cysteine 1650, and cysteine 1653–cysteine 1668. Laminin EGF-like domains follow at residues 1563–1612 and 1613–1670; these read CECN…DCQP and CACP…RCQP. 14 consecutive Ig-like C2-type domains span residues 1677–1771, 1772–1865, 1866–1954, 1955–2049, 2050–2148, 2149–2244, 2245–2343, 2344–2436, 2437–2532, 2533–2619, 2620–2720, 2721–2809, 2810–2895, and 2896–2980; these read EVQI…KPIM, VTVE…STAP, VASI…GGSG, PRVQ…PAPA, SPAP…PGVV, PPIR…PAPG, LAQP…RLRS, PVIS…PPTV, SVLP…APGT, PQVQ…VESP, PYAT…GGST, PTVQ…ALPS, VLIN…LVQA, and LPQI…LQVP. The interval 1713–1733 is disordered; sequence DGRPLPSSAQQRHQGSELHFP. 3 disulfides stabilise this stretch: cysteine 1792–cysteine 1839, cysteine 1886–cysteine 1932, and cysteine 1976–cysteine 2021. The interval 2039 to 2061 is disordered; sequence SPSTNSPPAPASPAPIRIESSSS. The segment covering 2052–2061 has biased composition (low complexity); it reads APIRIESSSS. Disulfide bonds link cysteine 2073/cysteine 2118, cysteine 2170/cysteine 2215, and cysteine 2268/cysteine 2313. Residues asparagine 2336, asparagine 2394, and asparagine 2427 are each glycosylated (N-linked (GlcNAc...) asparagine). A disulfide bridge connects residues cysteine 2365 and cysteine 2413. 2 disulfides stabilise this stretch: cysteine 2456-cysteine 2506 and cysteine 2554-cysteine 2599. A glycan (N-linked (GlcNAc...) asparagine) is linked at asparagine 2600. A disulfide bond links cysteine 2641 and cysteine 2686. Cystine bridges form between cysteine 2831–cysteine 2876 and cysteine 2917–cysteine 2962. Residues 2984-3162 form the Laminin G-like 1 domain; that stretch reads IPYFTQTPYS…VNLTTHGISH (179 aa). 2 N-linked (GlcNAc...) asparagine glycosylation sites follow: asparagine 3098 and asparagine 3154. Disulfide bonds link cysteine 3137–cysteine 3163, cysteine 3166–cysteine 3177, cysteine 3171–cysteine 3187, cysteine 3204–cysteine 3216, and cysteine 3229–cysteine 3238. In terms of domain architecture, EGF-like spans 3163–3241; it reads CPTCQDRPCQ…GRSGVRCEEG (79 aa). One can recognise a Laminin G-like 2 domain in the interval 3245–3425; sequence TTPSMSGAGS…VGQCYDSSPC (181 aa). Asparagine 3385 carries an N-linked (GlcNAc...) asparagine glycan. 7 disulfide bridges follow: cysteine 3393–cysteine 3419, cysteine 3425–cysteine 3436, cysteine 3430–cysteine 3446, cysteine 3448–cysteine 3457, cysteine 3464–cysteine 3476, cysteine 3470–cysteine 3481, and cysteine 3483–cysteine 3492. O-linked (Xyl...) (chondroitin sulfate) serine glycosylation occurs at serine 3510. Positions 3518–3705 constitute a Laminin G-like 3 domain; that stretch reads QYGAYFYDNG…AQAGANTRPC (188 aa). The Ca(2+) site is built by aspartate 3574 and leucine 3591. The mediates motor neuron attachment stretch occupies residues 3615-3617; sequence LRE. Alanine 3641 and asparagine 3643 together coordinate Ca(2+). A disulfide bridge links cysteine 3671 with cysteine 3705. Positions 3680-3707 are disordered; sequence ARPGAPPPQPLDLQHRAQAGANTRPCPS.

As to quaternary structure, has a strong tendency to aggregate in dimers or stellate structures. Interacts with other basement membrane components such as laminin, prolargin and collagen type IV. Interacts with COL13A1. Interacts with FGFBP1. Interacts with VWA1. Interacts (via C-terminus) with ECM1 (via C-terminus). Interacts with SVEP1. Post-translationally, proteolytic processing produces the C-terminal angiogenic peptide, endorepellin. This peptide can be further processed to produce the LG3 peptide. O-glycosylated. Contains three heparan sulfate chains. Also contains chondroitin sulfate.

The protein localises to the secreted. The protein resides in the extracellular space. It is found in the extracellular matrix. It localises to the basement membrane. Its function is as follows. Integral component of basement membranes. Component of the glomerular basement membrane (GBM), responsible for the fixed negative electrostatic membrane charge, and which provides a barrier which is both size- and charge-selective. It serves as an attachment substrate for cells. Plays essential roles in vascularization. Critical for normal heart development and for regulating the vascular response to injury. Also required for avascular cartilage development. Functionally, anti-angiogenic and anti-tumor peptide that inhibits endothelial cell migration, collagen-induced endothelial tube morphogenesis and blood vessel growth in the chorioallantoic membrane. Blocks endothelial cell adhesion to fibronectin and type I collagen. Anti-tumor agent in neovascularization. Interaction with its ligand, integrin alpha2/beta1, is required for the anti-angiogenic properties. Evokes a reduction in phosphorylation of receptor tyrosine kinases via alpha2/beta1 integrin-mediated activation of the tyrosine phosphatase, PTPN6. Has anti-angiogenic properties that require binding of calcium ions for full activity. This chain is Basement membrane-specific heparan sulfate proteoglycan core protein (Hspg2), found in Mus musculus (Mouse).